Reading from the N-terminus, the 243-residue chain is Leucyl/phenylalanyl-tRNA--protein transferase (243 aa).

The protein belongs to the L/F-transferase family.

It is found in the cytoplasm. The enzyme catalyses N-terminal L-lysyl-[protein] + L-leucyl-tRNA(Leu) = N-terminal L-leucyl-L-lysyl-[protein] + tRNA(Leu) + H(+). It carries out the reaction N-terminal L-arginyl-[protein] + L-leucyl-tRNA(Leu) = N-terminal L-leucyl-L-arginyl-[protein] + tRNA(Leu) + H(+). The catalysed reaction is L-phenylalanyl-tRNA(Phe) + an N-terminal L-alpha-aminoacyl-[protein] = an N-terminal L-phenylalanyl-L-alpha-aminoacyl-[protein] + tRNA(Phe). In terms of biological role, functions in the N-end rule pathway of protein degradation where it conjugates Leu, Phe and, less efficiently, Met from aminoacyl-tRNAs to the N-termini of proteins containing an N-terminal arginine or lysine. This chain is Leucyl/phenylalanyl-tRNA--protein transferase, found in Saccharophagus degradans (strain 2-40 / ATCC 43961 / DSM 17024).